The primary structure comprises 527 residues: DUF21 domain-containing protein At1g47330 (527 aa).

At 1 to 15 the chain is on the extracellular side; sequence MSSDIPCCGTTFSLY. The CNNM transmembrane domain occupies 8–191; sequence CGTTFSLYVV…GKGGDLTTDE (184 aa). Residues 16 to 36 traverse the membrane as a helical segment; the sequence is VVIIIALVAFAGLMAGLTLGL. Over 37-70 the chain is Cytoplasmic; the sequence is MSLGLVDLEVLIKSGRPQDRINAGKIFPVVKNQH. The helical transmembrane segment at 71-91 threads the bilayer; the sequence is LLLCTLLIGNSMAMEALPIFL. The Extracellular segment spans residues 92 to 93; that stretch reads DK. Residues 94 to 114 traverse the membrane as a helical segment; the sequence is IVPPWLAILLSVTLILVFGEI. Residues 115–126 are Cytoplasmic-facing; that stretch reads MPQAVCTRYGLK. The chain crosses the membrane as a helical span at residues 127-147; sequence VGAIMAPFVRVLLVLFFPISY. The Extracellular segment spans residues 148-527; the sequence is PISKVLDWML…PKHEESTQTL (380 aa). CBS domains follow at residues 210-271, 274-334, and 366-435; these read MTPI…EVPL, MSMR…TKDE, and KSEN…ILDE. Disordered stretches follow at residues 307–335, 358–384, and 464–527; these read KDLD…KDEL, ETGD…LLAA, and ITQS…TQTL. Ser315 is modified (phosphoserine). A compositionally biased stretch (basic and acidic residues) spans 358–369; sequence ETGDAKSGKSEN. Over residues 464–501 the composition is skewed to low complexity; it reads ITQSSSGSTSPNQTSHMATPDSSPTTKPSNSSPTRKPS. The N-linked (GlcNAc...) asparagine glycan is linked to Asn475. A compositionally biased stretch (polar residues) spans 502–515; it reads VSSPTREPSDSSHS. Residues 518–527 are compositionally biased toward basic and acidic residues; sequence PKHEESTQTL.

It localises to the membrane. The sequence is that of DUF21 domain-containing protein At1g47330 (CBSDUF7) from Arabidopsis thaliana (Mouse-ear cress).